The sequence spans 600 residues: Elongation factor 4 (600 aa).

One can recognise a tr-type G domain in the interval 5 to 187 (KYIRNFSIIA…AIVNKLPPPK (183 aa)). GTP-binding positions include 17–22 (DHGKST) and 134–137 (NKID).

Belongs to the TRAFAC class translation factor GTPase superfamily. Classic translation factor GTPase family. LepA subfamily.

It localises to the cell inner membrane. It catalyses the reaction GTP + H2O = GDP + phosphate + H(+). Functionally, required for accurate and efficient protein synthesis under certain stress conditions. May act as a fidelity factor of the translation reaction, by catalyzing a one-codon backward translocation of tRNAs on improperly translocated ribosomes. Back-translocation proceeds from a post-translocation (POST) complex to a pre-translocation (PRE) complex, thus giving elongation factor G a second chance to translocate the tRNAs correctly. Binds to ribosomes in a GTP-dependent manner. In Rickettsia bellii (strain OSU 85-389), this protein is Elongation factor 4.